The sequence spans 255 residues: Hydroxyacylglutathione hydrolase (255 aa).

Residues H56, H58, D60, H61, H114, D133, and H171 each coordinate Zn(2+).

The protein belongs to the metallo-beta-lactamase superfamily. Glyoxalase II family. Monomer. It depends on Zn(2+) as a cofactor.

It carries out the reaction an S-(2-hydroxyacyl)glutathione + H2O = a 2-hydroxy carboxylate + glutathione + H(+). Its pathway is secondary metabolite metabolism; methylglyoxal degradation; (R)-lactate from methylglyoxal: step 2/2. Functionally, thiolesterase that catalyzes the hydrolysis of S-D-lactoyl-glutathione to form glutathione and D-lactic acid. In Cereibacter sphaeroides (strain ATCC 17023 / DSM 158 / JCM 6121 / CCUG 31486 / LMG 2827 / NBRC 12203 / NCIMB 8253 / ATH 2.4.1.) (Rhodobacter sphaeroides), this protein is Hydroxyacylglutathione hydrolase.